The sequence spans 234 residues: Orotidine 5'-phosphate decarboxylase (234 aa).

Residues Asp-10, Lys-32, 59 to 68, Thr-119, Arg-180, Gln-189, Gly-209, and Arg-210 each bind substrate; that span reads DLKFHDIPNT. The active-site Proton donor is the Lys-61.

Belongs to the OMP decarboxylase family. Type 1 subfamily. In terms of assembly, homodimer.

It catalyses the reaction orotidine 5'-phosphate + H(+) = UMP + CO2. It participates in pyrimidine metabolism; UMP biosynthesis via de novo pathway; UMP from orotate: step 2/2. In terms of biological role, catalyzes the decarboxylation of orotidine 5'-monophosphate (OMP) to uridine 5'-monophosphate (UMP). The sequence is that of Orotidine 5'-phosphate decarboxylase from Mannheimia succiniciproducens (strain KCTC 0769BP / MBEL55E).